The following is a 274-amino-acid chain: UPF0173 metal-dependent hydrolase Adeh_1068 (274 aa).

It belongs to the UPF0173 family.

This is UPF0173 metal-dependent hydrolase Adeh_1068 from Anaeromyxobacter dehalogenans (strain 2CP-C).